The chain runs to 1166 residues: Serine/threonine-protein kinase BRI1-like 1 (1166 aa).

An N-terminal signal peptide occupies residues 1-21 (MKQRWLLVLILCFFTTSLVMG). The Extracellular portion of the chain corresponds to 22–776 (IHGKHLINDD…IHAKKQTVAT (755 aa)). Residue asparagine 33 is glycosylated (N-linked (GlcNAc...) asparagine). The Cys pair 1 motif lies at 66-73 (CSWRGVSC). LRR repeat units lie at residues 78–99 (RIVG…VNLT), 103–124 (NLQN…SGSD), 126–147 (YLQV…DYVF), 152–173 (NLVS…APSS), 176–197 (SLTT…SFIS), 202–224 (SLKY…SFGI), 227–248 (NLTF…ITLP), 252–274 (FLET…EYWG), 278–300 (NLKQ…LSLL), 303–325 (TLVI…FTAC), 327–349 (WLQN…VVSK), 352–375 (GITY…TNCS), 376–397 (NLRV…GFCS), 403–424 (VLEK…ELGK), 427–449 (SLKT…IWML), 451–473 (NLSD…VCVK), 476–498 (NLET…ISRC), 500–522 (NMIW…IGNL), 524–547 (KLAI…GNCK), and 548–570 (SLIW…LASQ). Asparagine 97 carries an N-linked (GlcNAc...) asparagine glycan. A glycan (N-linked (GlcNAc...) asparagine) is linked at asparagine 157. Asparagine 212, asparagine 227, asparagine 237, and asparagine 257 each carry an N-linked (GlcNAc...) asparagine glycan. 2 N-linked (GlcNAc...) asparagine glycosylation sites follow: asparagine 362 and asparagine 373. N-linked (GlcNAc...) asparagine glycans are attached at residues asparagine 451 and asparagine 461. Asparagine 521, asparagine 532, asparagine 558, and asparagine 638 each carry an N-linked (GlcNAc...) asparagine glycan. LRR repeat units follow at residues 664–686 (YLQV…FGGL), 688–710 (AIGV…LGSL), and 712–734 (FLSD…GQLT). Residues asparagine 722 and asparagine 743 are each glycosylated (N-linked (GlcNAc...) asparagine). A Cys pair 2 motif is present at residues 748–755 (CGVPLRPC). The helical transmembrane segment at 777–797 (AVIAGIAFSFMCFVMLVMALY) threads the bilayer. Over 798-1166 (RVRKVQKKEQ…LVEESRDKEP (369 aa)) the chain is Cytoplasmic. Threonine 848 and threonine 856 each carry phosphothreonine. Residues 859-1147 (FSAETMVGSG…KADTEEDESL (289 aa)) form the Protein kinase domain. ATP contacts are provided by residues 865-873 (VGSGGFGEV) and lysine 887. Tyrosine 932 carries the post-translational modification Phosphotyrosine. The active-site Proton acceptor is aspartate 987. Residue serine 1022 is modified to Phosphoserine. At tyrosine 1030 the chain carries Phosphotyrosine. The residue at position 1141 (threonine 1141) is a Phosphothreonine. The interval 1142–1166 (EEDESLDEFSLKETPLVEESRDKEP) is disordered.

The protein belongs to the protein kinase superfamily. Ser/Thr protein kinase family. In terms of tissue distribution, predominantly expressed in vascular tissues. From 7 day old seedlings, it is expressed in the columella cells of the root tip, in the vascular initials in the meristematic region of the root and in vascular tissues. After germination, it is expressed in the stele cell and in the early differentiation zone of the root, where the expression continues from the root to the hypocotyls and cotyledons following the midvein. In mature plants, it is expressed in the vasculature of the leaf, predominantly in the midvein, and in the vascular bundles of inflorescence stems. Localizes to procambial cells of the vascular bundles located between the differentiating xylem and the phloem.

It localises to the cell membrane. The catalysed reaction is L-seryl-[protein] + ATP = O-phospho-L-seryl-[protein] + ADP + H(+). It carries out the reaction L-threonyl-[protein] + ATP = O-phospho-L-threonyl-[protein] + ADP + H(+). In terms of biological role, receptor with a serine/threonine-protein kinase activity. Regulates, in response to brassinosteroid binding, a signaling cascade involved in plant development. Binds brassinolide. May be involved in cell growth and vascular differentiation. The polypeptide is Serine/threonine-protein kinase BRI1-like 1 (BRL1) (Arabidopsis thaliana (Mouse-ear cress)).